Here is a 96-residue protein sequence, read N- to C-terminus: Protein RnfH (96 aa).

Belongs to the UPF0125 (RnfH) family.

This Escherichia coli O139:H28 (strain E24377A / ETEC) protein is Protein RnfH.